Here is a 125-residue protein sequence, read N- to C-terminus: Large ribosomal subunit protein bL12 (125 aa).

Belongs to the bacterial ribosomal protein bL12 family. In terms of assembly, homodimer. Part of the ribosomal stalk of the 50S ribosomal subunit. Forms a multimeric L10(L12)X complex, where L10 forms an elongated spine to which 2 to 4 L12 dimers bind in a sequential fashion. Binds GTP-bound translation factors.

Functionally, forms part of the ribosomal stalk which helps the ribosome interact with GTP-bound translation factors. Is thus essential for accurate translation. The sequence is that of Large ribosomal subunit protein bL12 from Sphingopyxis alaskensis (strain DSM 13593 / LMG 18877 / RB2256) (Sphingomonas alaskensis).